The sequence spans 490 residues: Aspartyl/glutamyl-tRNA(Asn/Gln) amidotransferase subunit B (490 aa).

Belongs to the GatB/GatE family. GatB subfamily. Heterotrimer of A, B and C subunits.

The enzyme catalyses L-glutamyl-tRNA(Gln) + L-glutamine + ATP + H2O = L-glutaminyl-tRNA(Gln) + L-glutamate + ADP + phosphate + H(+). The catalysed reaction is L-aspartyl-tRNA(Asn) + L-glutamine + ATP + H2O = L-asparaginyl-tRNA(Asn) + L-glutamate + ADP + phosphate + 2 H(+). Its function is as follows. Allows the formation of correctly charged Asn-tRNA(Asn) or Gln-tRNA(Gln) through the transamidation of misacylated Asp-tRNA(Asn) or Glu-tRNA(Gln) in organisms which lack either or both of asparaginyl-tRNA or glutaminyl-tRNA synthetases. The reaction takes place in the presence of glutamine and ATP through an activated phospho-Asp-tRNA(Asn) or phospho-Glu-tRNA(Gln). The chain is Aspartyl/glutamyl-tRNA(Asn/Gln) amidotransferase subunit B from Burkholderia pseudomallei (strain 1106a).